A 157-amino-acid chain; its full sequence is Protein Smg homolog (157 aa).

This sequence belongs to the Smg family.

The sequence is that of Protein Smg homolog from Shewanella frigidimarina (strain NCIMB 400).